The following is a 216-amino-acid chain: Corrinoid protein DSY3155 (216 aa).

One can recognise a B12-binding N-terminal domain in the interval 1–90; sequence MIMSLLDELK…EIAKKGMSEG (90 aa). The region spanning 93–216 is the B12-binding domain; sequence KGKIVLGTVE…VELANKILGK (124 aa). A methylcob(III)alamin-binding site is contributed by histidine 106.

This sequence belongs to the methylamine corrinoid protein family.

Its function is as follows. Probably harbors a corrinoid prosthetic group and acts as a methyl group carrier between MtgB and MtgA. A methyl group from glycine betaine is likely first transferred to the corrinoid prosthetic group of the enzyme by MtgB, and then transferred to tetrahydrofolate (THF) by MtgA. The methyl group may then be ultimately converted to carbon dioxide, and its oxidation would also provide reducing equivalents for anaerobic respiration. Thus, may function in the pathway that allows anaerobic methylotrophic growth of D.hafniense using glycine betaine. The protein is Corrinoid protein DSY3155 of Desulfitobacterium hafniense (strain Y51).